The primary structure comprises 647 residues: Nucleolar GTP-binding protein 1 (647 aa).

The OBG-type G domain maps to 168-340; sequence RTLLICGYPN…VRNKACEKLL (173 aa). GTP is bound by residues 174–181, 220–224, and 288–291; these read GYPNVGKS, DTPGI, and NKTD. Ser563 is subject to Phosphoserine. The disordered stretch occupies residues 594 to 647; sequence ADGSMRSKADRMAKMERRERNRHAKQGESDRHNAVSLSKHLFSGKRGVGKTDFR. Over residues 598–626 the composition is skewed to basic and acidic residues; that stretch reads MRSKADRMAKMERRERNRHAKQGESDRHN.

This sequence belongs to the TRAFAC class OBG-HflX-like GTPase superfamily. OBG GTPase family. NOG subfamily. As to quaternary structure, associated with nucleolar and cytoplasmic pre-60S particles. Directly interacts with RLP24.

Its subcellular location is the nucleus. It localises to the nucleolus. Functionally, involved in the biogenesis of the 60S ribosomal subunit. The sequence is that of Nucleolar GTP-binding protein 1 (NOG1) from Saccharomyces cerevisiae (strain ATCC 204508 / S288c) (Baker's yeast).